A 1322-amino-acid chain; its full sequence is FERM and PDZ domain-containing protein 4 (1322 aa).

The 34-residue stretch at 33 to 66 (QVPPYGWEMTANRDGRDYFINHMTQAIPFDDPRL) folds into the WW domain. The 78-residue stretch at 78 to 155 (KVEMRRDPVL…SILLTVIQPY (78 aa)) folds into the PDZ domain. The FERM domain occupies 204–519 (NVLKVYLENG…GYYRLLVDSR (316 aa)). Disordered regions lie at residues 809 to 847 (APPP…EIPV), 900 to 927 (SPES…TAQK), 952 to 983 (EFPA…PPKV), 1027 to 1080 (RKSK…STFN), 1105 to 1148 (SGLE…GQGD), 1160 to 1180 (AKDL…PSKL), and 1207 to 1227 (HFSL…TGSS). Positions 902-921 (ESSSDSGNETNSSEMTESSE) are enriched in low complexity. Positions 1041–1054 (NGNTTGKKQQGTKT) are enriched in low complexity. The segment covering 1067-1080 (TVSSRDSQHLSTFN) has biased composition (polar residues). Positions 1207–1217 (HFSLQSSQGSS) are enriched in polar residues.

In terms of assembly, interacts (via C-terminus) with DLG1, DLG2, DLG3 and DLG4/PSD95. Interacts (via N-terminus) with ARHGEF7; the interaction is mediated by the PDZ domain. Interacts with GPSM2 (via TPR repeat region).

The protein resides in the cell projection. The protein localises to the dendritic spine. Its function is as follows. Positive regulator of dendritic spine morphogenesis and density. Required for the maintenance of excitatory synaptic transmission. Binds phosphatidylinositol 4,5-bisphosphate. The sequence is that of FERM and PDZ domain-containing protein 4 (FRMPD4) from Homo sapiens (Human).